Reading from the N-terminus, the 865-residue chain is Adenylate cyclase (865 aa).

The segment at 1 to 540 (MYLYIETLKQ…DISSHFPIRL (540 aa)) is catalytic. The regulatory stretch occupies residues 546-865 (KALYSPCEIR…FNDYQAVHHH (320 aa)).

This sequence belongs to the adenylyl cyclase class-1 family.

It is found in the cytoplasm. It carries out the reaction ATP = 3',5'-cyclic AMP + diphosphate. This is Adenylate cyclase (cya) from Proteus mirabilis.